The chain runs to 238 residues: Immunoglobulin superfamily member 6 (238 aa).

The signal sequence occupies residues 1–27 (MGPVSTSRRGLRLGISLILLQVGVVGA). Residues 28-153 (CTVSVLQPGY…RLFSREVHSL (126 aa)) are Extracellular-facing. One can recognise an Ig-like C2-type domain in the interval 30–134 (VSVLQPGYLE…EPVPTAKQTG (105 aa)). A disulfide bridge links cysteine 51 with cysteine 118. The chain crosses the membrane as a helical span at residues 154 to 174 (LIVLLALLAVYVTGVCVIFIV). Topologically, residues 175 to 238 (LFRSKSNTPR…RKALPSPGRP (64 aa)) are cytoplasmic. Residues 215 to 230 (ETSHQPEQDGNYENRK) show a composition bias toward basic and acidic residues. Residues 215-238 (ETSHQPEQDGNYENRKALPSPGRP) form a disordered region.

It is found in the membrane. This is Immunoglobulin superfamily member 6 (Igsf6) from Rattus norvegicus (Rat).